Here is a 169-residue protein sequence, read N- to C-terminus: Eukaryotic translation initiation factor 5A-2 (169 aa).

A Hypusine modification is found at Lys64.

The protein belongs to the eIF-5A family. Lys-51 undergoes hypusination, a unique post-translational modification that consists in the addition of a butylamino group from spermidine to lysine side chain, leading to the formation of the unusual amino acid hypusine. eIF-5As are the only known proteins to undergo this modification, which is essential for their function.

The protein localises to the cytoplasm. The protein resides in the nucleus. Translation factor that promotes translation elongation and termination, particularly upon ribosome stalling at specific amino acid sequence contexts. Binds between the exit (E) and peptidyl (P) site of the ribosome and promotes rescue of stalled ribosome: specifically required for efficient translation of polyproline-containing peptides as well as other motifs that stall the ribosome. Acts as a ribosome quality control (RQC) cofactor by joining the RQC complex to facilitate peptidyl transfer during CAT tailing step. The sequence is that of Eukaryotic translation initiation factor 5A-2 (tif51b) from Schizosaccharomyces pombe (strain 972 / ATCC 24843) (Fission yeast).